We begin with the raw amino-acid sequence, 100 residues long: Apolipoprotein C-II (100 aa).

Residues 1–22 (MGSRFLLALFLVLLVLGYEVQG) form the signal peptide. Residues 66–74 (SVDEKLRDM) form a lipid binding region. The interval 78-100 (SSAAVSTYAGIFTDQILTLLKGE) is lipoprotein lipase cofactor.

This sequence belongs to the apolipoprotein C2 family. In terms of processing, proapolipoprotein C-II is synthesized as a sialic acid containing glycoprotein which is subsequently desialylated prior to its proteolytic processing. Proapolipoprotein C-II, the major form found in plasma undergoes proteolytic cleavage of its N-terminal hexapeptide to generate the mature form apolipoprotein C-II, which occurs as the minor form in plasma.

It localises to the secreted. In terms of biological role, component of chylomicrons, very low-density lipoproteins (VLDL), low-density lipoproteins (LDL), and high-density lipoproteins (HDL) in plasma. Plays an important role in lipoprotein metabolism as an activator of lipoprotein lipase. The chain is Apolipoprotein C-II (Apoc2) from Neotoma lepida (Desert woodrat).